The sequence spans 638 residues: Polypeptide N-acetylgalactosaminyltransferase 15 (638 aa).

Residues 1 to 12 (MLPRKRPRSGRS) lie on the Cytoplasmic side of the membrane. The chain crosses the membrane as a helical; Signal-anchor for type II membrane protein span at residues 13-35 (RLQFLLLFLTLGCVLMMVILLHP). The Lumenal portion of the chain corresponds to 36 to 638 (PPPTLHQAVT…FDQIHPVDER (603 aa)). The interval 134–157 (KDWRTEEDGEESEEVLTPLGPDSD) is disordered. 5 disulfide bridges follow: cysteine 181-cysteine 411, cysteine 402-cysteine 481, cysteine 516-cysteine 535, cysteine 561-cysteine 574, and cysteine 602-cysteine 619. The segment at 190–299 (LPTASVILCF…PGWLEPLLSR (110 aa)) is catalytic subdomain A. 2 residues coordinate substrate: aspartate 231 and arginine 260. Mn(2+) is bound by residues aspartate 283, histidine 285, and histidine 416. Positions 357-419 (PVRSPVVPRE…PCSRVGHIYR (63 aa)) are catalytic subdomain B. Substrate is bound at residue arginine 419. In terms of domain architecture, Ricin B-type lectin spans 503-630 (RFSGKLHNTG…GKTSQLWRFD (128 aa)). Asparagine 573 carries an N-linked (GlcNAc...) asparagine glycan.

This sequence belongs to the glycosyltransferase 2 family. GalNAc-T subfamily. The cofactor is Mn(2+). Specifically expressed in testis.

It localises to the golgi apparatus membrane. It catalyses the reaction L-seryl-[protein] + UDP-N-acetyl-alpha-D-galactosamine = a 3-O-[N-acetyl-alpha-D-galactosaminyl]-L-seryl-[protein] + UDP + H(+). The enzyme catalyses L-threonyl-[protein] + UDP-N-acetyl-alpha-D-galactosamine = a 3-O-[N-acetyl-alpha-D-galactosaminyl]-L-threonyl-[protein] + UDP + H(+). The protein operates within protein modification; protein glycosylation. Functionally, catalyzes the initial reaction in O-linked oligosaccharide biosynthesis, the transfer of an N-acetyl-D-galactosamine residue to a serine or threonine residue on the protein receptor. Although it displays a much weaker activity toward all substrates tested compared to GALNT2, it is able to transfer up to seven GalNAc residues to the Muc5AC peptide, suggesting that it can fill vicinal Thr/Ser residues in cooperation with other GALNT proteins. Prefers Muc1a as substrate. This Mus musculus (Mouse) protein is Polypeptide N-acetylgalactosaminyltransferase 15 (Galnt15).